We begin with the raw amino-acid sequence, 180 residues long: Napin (180 aa).

The N-terminal stretch at 1–21 (MANKLFLVSATLAFFFLLTNA) is a signal peptide. 2 propeptides span residues 22 to 38 (SIYRTIVEVDEDDATNP) and 75 to 94 (PSWTLDGEFDFEDDMENPQG).

This sequence belongs to the 2S seed storage albumins family. The mature protein consists of a small and a large chain linked by disulfide bonds. As to expression, cotyledons and the axis.

Functionally, the small, basic, water-soluble napins are one of the two major kinds of storage proteins synthesized in the seed during its maturation. This chain is Napin (NAP1), found in Brassica napus (Rape).